We begin with the raw amino-acid sequence, 485 residues long: MVVTFTSRRSEPVLLRPARPTPRETKQLSDLDDQRTLRYYETVVGFFRRCDGGAAGAVGAPADPAKAIRAALAEALVYYYPVAGRLREVADGGGAGNRLVVDCTAEGVVFVEADADVRLEDFGQPLLPPYPCVGELLCDAGDTRAVVGKPLLLMQVTQLKCGGFVLGFHICHNIADGFGMAQLIMAIADLARGEPAPTILPVWRRDLLTAARLGSGAVARTPFASAAAASASASSPALQNGARRAAAAADAMLSTPPDRMVVEYFLFGPREVSYLRGQLPAHLADSTTVFELLTAVMWRCRTAALGYGPDLRVRLMITMNARGRWNAHTPLPRGFYGNAHVSPVAEAAAGDLLGRPLADTVELVRRTKRGMTRERMSAMVETVAQLREWPPSSMDRVYEVSDIKWTTVNLLKFGWAEFAGGGIPLAGDLTSKLGSDHTRCKNSAGEVSTVVSMLLPRVAMARFKKEMAVLLNKDDKKSLTIMSSL.

His172 acts as the Proton acceptor in catalysis.

Belongs to the plant acyltransferase family. In terms of tissue distribution, highly expressed in young panicles. Expressed in leaf sheaths and panicles.

Functionally, involved in defense against pathogens. May contribute to disease resistance by potentiating disease resistance signaling, or producing phytoalexin-like secondary products. This chain is Acyl transferase 1, found in Oryza sativa subsp. japonica (Rice).